We begin with the raw amino-acid sequence, 424 residues long: uncharacterized protein (424 aa).

The next 11 helical transmembrane spans lie at 9–29 (ITWI…GILI), 41–61 (ASLF…GTLA), 86–106 (GAIL…IIAL), 119–139 (ADWQ…LLHM), 148–168 (ISTL…AVSL), 184–204 (WSAA…WEMI), 222–242 (LFLA…VTVG), 270–290 (VTVC…IAGF), 320–340 (VLTA…LFQI), 345–365 (LLKG…AAAL), and 377–397 (MALG…WALL).

The protein belongs to the amino acid-polyamine-organocation (APC) superfamily.

The protein localises to the cell membrane. This is an uncharacterized protein from Bacillus subtilis (strain 168).